The sequence spans 103 residues: Transcription factor S (103 aa).

The Zn(2+) site is built by Cys4, Cys7, Cys20, Cys23, Cys64, Cys67, Cys92, and Cys95. Residues 4-23 form a C4-type zinc finger; sequence CPKCKSLMIYQGDKLVCRKC. Residues 60–100 form a TFIIS-type zinc finger; it reads TKAICPACGHNEAFWWLRQLRAADESEVRFFRCTKCGKTWR.

This sequence belongs to the archaeal RpoM/eukaryotic RPA12/RPB9/RPC11 RNA polymerase family.

Functionally, induces RNA cleavage activity in the RNA polymerase. In its presence, the cleavage activity of the RNA polymerase truncates the RNA back to position +15 in a stepwise manner by releasing mainly dinucleotides from the 3'-end of the nascent RNA. The truncated RNAs are able to continue elongation. Involved in transcriptional proofreading and fidelity. Misincorporation of nucleotides during elongation of transcription leads to arrested elongation complexes which are rescued by TFS-promoted removal of a dinucleotide from the 3'-end. TFS is able to induce a cleavage resynthesis cycle in stalled elongation complexes (resulting from the next missing nucleotide or a reduced incorporation rate of a wrong nucleotide) preventing misincorporation and enabling proofreading in a post-incorporation manner. Pausing of elongation complexes is the main determinant of TFS-induced RNA cleavage. The chain is Transcription factor S from Archaeoglobus fulgidus (strain ATCC 49558 / DSM 4304 / JCM 9628 / NBRC 100126 / VC-16).